The sequence spans 67 residues: Large ribosomal subunit protein uL29 (67 aa).

Belongs to the universal ribosomal protein uL29 family.

The protein is Large ribosomal subunit protein uL29 of Polaromonas naphthalenivorans (strain CJ2).